We begin with the raw amino-acid sequence, 129 residues long: Phosphoribosyl-AMP cyclohydrolase (129 aa).

Aspartate 85 contacts Mg(2+). Position 86 (cysteine 86) interacts with Zn(2+). Mg(2+) is bound by residues aspartate 87 and aspartate 89. Cysteine 102 and cysteine 109 together coordinate Zn(2+).

Belongs to the PRA-CH family. As to quaternary structure, homodimer. It depends on Mg(2+) as a cofactor. Zn(2+) is required as a cofactor.

It is found in the cytoplasm. It carries out the reaction 1-(5-phospho-beta-D-ribosyl)-5'-AMP + H2O = 1-(5-phospho-beta-D-ribosyl)-5-[(5-phospho-beta-D-ribosylamino)methylideneamino]imidazole-4-carboxamide. The protein operates within amino-acid biosynthesis; L-histidine biosynthesis; L-histidine from 5-phospho-alpha-D-ribose 1-diphosphate: step 3/9. Functionally, catalyzes the hydrolysis of the adenine ring of phosphoribosyl-AMP. In Methanococcus maripaludis (strain C6 / ATCC BAA-1332), this protein is Phosphoribosyl-AMP cyclohydrolase.